The sequence spans 336 residues: UDP-3-O-acylglucosamine N-acyltransferase (336 aa).

H237 functions as the Proton acceptor in the catalytic mechanism.

The protein belongs to the transferase hexapeptide repeat family. LpxD subfamily. As to quaternary structure, homotrimer.

It catalyses the reaction a UDP-3-O-[(3R)-3-hydroxyacyl]-alpha-D-glucosamine + a (3R)-hydroxyacyl-[ACP] = a UDP-2-N,3-O-bis[(3R)-3-hydroxyacyl]-alpha-D-glucosamine + holo-[ACP] + H(+). Its pathway is bacterial outer membrane biogenesis; LPS lipid A biosynthesis. Catalyzes the N-acylation of UDP-3-O-acylglucosamine using 3-hydroxyacyl-ACP as the acyl donor. Is involved in the biosynthesis of lipid A, a phosphorylated glycolipid that anchors the lipopolysaccharide to the outer membrane of the cell. This chain is UDP-3-O-acylglucosamine N-acyltransferase, found in Alcanivorax borkumensis (strain ATCC 700651 / DSM 11573 / NCIMB 13689 / SK2).